Here is a 510-residue protein sequence, read N- to C-terminus: NKAP family protein (510 aa).

Residues 1–22 (MSHRERDRDRDRDSDRDRDRNR) are compositionally biased toward basic and acidic residues. Disordered stretches follow at residues 1–128 (MSHR…VEIQ), 149–220 (ERKD…NYNG), and 239–401 (VYER…PISE). Basic residues predominate over residues 23-39 (YSRSRSRGSRSRSRSRS). Basic and acidic residues predominate over residues 40-89 (RSRDRNRNRDYNKDRSSNRDSYYNDRDYKKDRSSNRDRDYYDRDRNRDYK). Residues 96–105 (SSGGGGGGSG) are compositionally biased toward gly residues. Composition is skewed to low complexity over residues 112 to 123 (SSSYRESNSNNS) and 184 to 219 (NNNN…SNYN). Residues 262–273 (NKKKSKKSRRKS) are compositionally biased toward basic residues. A compositionally biased stretch (low complexity) spans 274 to 283 (SSNSDSSSSD). A compositionally biased stretch (basic residues) spans 292-322 (REKRKKSKSRKDKKKRKEKKKHQRKSSKRSS). The segment covering 342–351 (DSDRSDSEGR) has biased composition (basic and acidic residues). Positions 352 to 367 (SRKKRSKKRSKKRHDH) are enriched in basic residues. Over residues 368–383 (HKESVHDASMWEEKVE) the composition is skewed to basic and acidic residues.

It belongs to the NKAP family.

The sequence is that of NKAP family protein from Dictyostelium discoideum (Social amoeba).